Here is a 415-residue protein sequence, read N- to C-terminus: FXa-directed anticoagulant (415 aa).

Positions 1–17 (MYLKIVILVTFPLVCFT) are cleaved as a signal peptide. N-linked (GlcNAc...) asparagine glycans are attached at residues asparagine 117, asparagine 166, asparagine 216, and asparagine 320.

This sequence belongs to the serpin family. (Microbial infection) Interacts with Zika virus envelope protein E and Zika virus-like particles; the interaction does not affect Zika virus replication in human endothelial cells and keratinocytes. Post-translationally, the N-terminus is blocked. In terms of tissue distribution, female salivary gland (at protein level). Not detected in female carcass without head and salivary glands. Not detected in male tissues.

Its subcellular location is the secreted. In terms of biological role, anticoagulant serpin-type protein inhibiting host coagulation factor Xa (F10). Does not inhibit host thrombin (F2) and trypsin. Functionally, (Microbial infection) Does not affect Zika virus replication in human endothelial cells and keratinocytes. This chain is FXa-directed anticoagulant, found in Aedes aegypti (Yellowfever mosquito).